The chain runs to 2327 residues: Kielin/chordin-like protein (2327 aa).

The first 19 residues, 1-19 (MNTLLWTILLPLLFSFCVC), serve as a signal peptide directing secretion. The tract at residues 250–294 (LPLPYSLSGERQMEDEEIQREPRAPDLSDTDHYQQQQSEVPAQLL) is disordered. A compositionally biased stretch (basic and acidic residues) spans 268-281 (QREPRAPDLSDTDH). A coiled-coil region spans residues 291–332 (AQLLAKDDRLQRLEEAVKGLTNMIDMIKSQNADLQARVIALE). VWFC domains are found at residues 339–400 (STCV…SVGP), 401–438 (CMSCICQSGEVSCTPKLCPPVTCSDPVTLPNECCPLCA), 439–493 (TGCS…AKCQ), 494–553 (QGCE…PSCP), 554–610 (VCEL…LDCS), 611–669 (ACEM…SQCQ), 670–728 (SCMD…PMCD), 729–786 (GCLY…PRCE), 787–847 (GCEY…PSCD), 848–907 (VCDF…PVCK), 908–966 (VCVQ…PVCD), 967–1025 (SCSY…AKCP), 1026–1083 (DCRY…NNCN), 1084–1142 (GCNY…PQCP), 1146–1203 (ADCP…RSCD), 1204–1260 (GCLM…KECQ), 1261–1319 (DCQY…PVCD), 1321–1377 (CSYN…CPIC), 1378–1439 (QGCH…DGCN), 1440–1495 (YSGR…PRCT), 1496–1555 (GICK…PVCD), 1556–1614 (RCFY…RECP), 1615–1673 (VCRY…PRCR), 1674–1731 (GCVY…PVCA), 1732–1799 (DCIS…SSCA), 1800–1860 (QALS…PVCN), 1861–1924 (ECVV…HECQ), and 1928–1988 (VSCW…PHCI). Residues 1992–2168 (ATCIAFGDPH…SSNDSSSSCW (177 aa)) enclose the VWFD domain. Cystine bridges form between Cys1994–Cys2126 and Cys2016–Cys2167. Residues 2259 to 2319 (CPHDRGYVFD…ESHCIPPESC (61 aa)) enclose the TIL domain.

The protein resides in the secreted. In terms of biological role, may be a signaling molecule that mediates inductive activities of the embryonic midline. Able to dorsalize mesoderm. The protein is Kielin/chordin-like protein (kcp) of Xenopus laevis (African clawed frog).